A 124-amino-acid chain; its full sequence is Small ribosomal subunit protein uS12 (124 aa).

The segment covering 11 to 20 (GRKRLKKKSK) has biased composition (basic residues). Positions 11-30 (GRKRLKKKSKSPALENNPQK) are disordered. Position 89 is a 3-methylthioaspartic acid (D89). The disordered stretch occupies residues 105 to 124 (EGVANRRQSRSRYGAKKPKK). Over residues 111–124 (RQSRSRYGAKKPKK) the composition is skewed to basic residues.

This sequence belongs to the universal ribosomal protein uS12 family. Part of the 30S ribosomal subunit. Contacts proteins S8 and S17. May interact with IF1 in the 30S initiation complex.

With S4 and S5 plays an important role in translational accuracy. In terms of biological role, interacts with and stabilizes bases of the 16S rRNA that are involved in tRNA selection in the A site and with the mRNA backbone. Located at the interface of the 30S and 50S subunits, it traverses the body of the 30S subunit contacting proteins on the other side and probably holding the rRNA structure together. The combined cluster of proteins S8, S12 and S17 appears to hold together the shoulder and platform of the 30S subunit. In Kosmotoga olearia (strain ATCC BAA-1733 / DSM 21960 / TBF 19.5.1), this protein is Small ribosomal subunit protein uS12.